The chain runs to 65 residues: Ovary maturating parsin (65 aa).

Over residues 17-28 (PAAPAVAPAAPA) the composition is skewed to low complexity. Residues 17–36 (PAAPAVAPAAPASWPHQQRR) form a disordered region.

As to quaternary structure, monomer.

Its function is as follows. Neurohormone that anticipates ovarian maturation. Acts as a true gonadotropin and stimulates vitellogenin biosynthesis. The sequence is that of Ovary maturating parsin from Locusta migratoria (Migratory locust).